Here is a 371-residue protein sequence, read N- to C-terminus: DNA replication and repair protein RecF (371 aa).

30 to 37 (GANAQGKT) provides a ligand contact to ATP.

This sequence belongs to the RecF family.

Its subcellular location is the cytoplasm. The RecF protein is involved in DNA metabolism; it is required for DNA replication and normal SOS inducibility. RecF binds preferentially to single-stranded, linear DNA. It also seems to bind ATP. The protein is DNA replication and repair protein RecF of Lacticaseibacillus casei (strain BL23) (Lactobacillus casei).